The following is a 253-amino-acid chain: MRILLSNDDGYLAPGLAALSDALQPLADVTVIAPEQNCSGASNSLTLSRPLSVQRAANTGFFYVNGTPTDSVHVALTGMADARPDLVVSGINNGQNMGEDTLYSGTVAAATEGIMFGVPAIAFSLADKGWAHLADAARVAAEIVAHYLAHPLPGQPLLNVNIPNLPYDALKGWQVTRLGKRHPSQPVIRQTDPRGEPVYWIGAAGAALDASEGTDFHAIANGFVSITPLQLDLTHTQMLPATRDWARAAGRAS.

A divalent metal cation contacts are provided by Asp8, Asp9, Ser39, and Asn92.

Belongs to the SurE nucleotidase family. A divalent metal cation is required as a cofactor.

It is found in the cytoplasm. It catalyses the reaction a ribonucleoside 5'-phosphate + H2O = a ribonucleoside + phosphate. Its function is as follows. Nucleotidase that shows phosphatase activity on nucleoside 5'-monophosphates. This is 5'-nucleotidase SurE from Burkholderia vietnamiensis (strain G4 / LMG 22486) (Burkholderia cepacia (strain R1808)).